Consider the following 322-residue polypeptide: Lipoyl synthase (322 aa).

7 residues coordinate [4Fe-4S] cluster: Cys-61, Cys-66, Cys-72, Cys-87, Cys-91, Cys-94, and Ser-300. The 217-residue stretch at 73 to 289 folds into the Radical SAM core domain; that stretch reads WDKKHATFMI…ETVAYTKGFL (217 aa).

This sequence belongs to the radical SAM superfamily. Lipoyl synthase family. The cofactor is [4Fe-4S] cluster.

It localises to the cytoplasm. The enzyme catalyses [[Fe-S] cluster scaffold protein carrying a second [4Fe-4S](2+) cluster] + N(6)-octanoyl-L-lysyl-[protein] + 2 oxidized [2Fe-2S]-[ferredoxin] + 2 S-adenosyl-L-methionine + 4 H(+) = [[Fe-S] cluster scaffold protein] + N(6)-[(R)-dihydrolipoyl]-L-lysyl-[protein] + 4 Fe(3+) + 2 hydrogen sulfide + 2 5'-deoxyadenosine + 2 L-methionine + 2 reduced [2Fe-2S]-[ferredoxin]. The protein operates within protein modification; protein lipoylation via endogenous pathway; protein N(6)-(lipoyl)lysine from octanoyl-[acyl-carrier-protein]: step 2/2. Functionally, catalyzes the radical-mediated insertion of two sulfur atoms into the C-6 and C-8 positions of the octanoyl moiety bound to the lipoyl domains of lipoate-dependent enzymes, thereby converting the octanoylated domains into lipoylated derivatives. The sequence is that of Lipoyl synthase from Rhizobium meliloti (strain 1021) (Ensifer meliloti).